A 406-amino-acid chain; its full sequence is Cysteine desulfurase IscS (406 aa).

Pyridoxal 5'-phosphate is bound by residues 75 to 76 (AT), N155, Q183, and 203 to 205 (SSH). Residue K206 is modified to N6-(pyridoxal phosphate)lysine. Pyridoxal 5'-phosphate is bound at residue T243. The active-site Cysteine persulfide intermediate is the C330. Residue C330 coordinates [2Fe-2S] cluster.

Belongs to the class-V pyridoxal-phosphate-dependent aminotransferase family. NifS/IscS subfamily. Homodimer. Forms a heterotetramer with IscU, interacts with other sulfur acceptors. Pyridoxal 5'-phosphate is required as a cofactor.

It is found in the cytoplasm. It catalyses the reaction (sulfur carrier)-H + L-cysteine = (sulfur carrier)-SH + L-alanine. It participates in cofactor biosynthesis; iron-sulfur cluster biosynthesis. Master enzyme that delivers sulfur to a number of partners involved in Fe-S cluster assembly, tRNA modification or cofactor biosynthesis. Catalyzes the removal of elemental sulfur atoms from cysteine to produce alanine. Functions as a sulfur delivery protein for Fe-S cluster synthesis onto IscU, an Fe-S scaffold assembly protein, as well as other S acceptor proteins. The polypeptide is Cysteine desulfurase IscS (Haemophilus ducreyi (strain 35000HP / ATCC 700724)).